Consider the following 870-residue polypeptide: DNA mismatch repair protein MutS (870 aa).

608–615 (GPNMAGKS) is an ATP binding site.

The protein belongs to the DNA mismatch repair MutS family.

This protein is involved in the repair of mismatches in DNA. It is possible that it carries out the mismatch recognition step. This protein has a weak ATPase activity. The sequence is that of DNA mismatch repair protein MutS from Persephonella marina (strain DSM 14350 / EX-H1).